Consider the following 541-residue polypeptide: Ankyrin repeat domain-containing protein 13C (541 aa).

A compositionally biased stretch (basic and acidic residues) spans 1–20 (MTGEKIRSLRRDHKPSKEDG). The segment at 1–53 (MTGEKIRSLRRDHKPSKEDGDVLEPCEEEATAALGGAFTGGRSGPGGSGKGGK) is disordered. Residues 21–30 (DVLEPCEEEA) are compositionally biased toward acidic residues. The span at 37 to 52 (AFTGGRSGPGGSGKGG) shows a compositional bias: gly residues. ANK repeat units lie at residues 111-142 (PSLY…QKDN), 143-172 (HGNT…PVKV), and 176-205 (QGWS…QQSR). Phosphoserine is present on Ser-411.

Its subcellular location is the endoplasmic reticulum membrane. Acts as a molecular chaperone for G protein-coupled receptors, regulating their biogenesis and exit from the ER. The sequence is that of Ankyrin repeat domain-containing protein 13C (Ankrd13c) from Mus musculus (Mouse).